The following is a 566-amino-acid chain: Serine/threonine-protein kinase ppk14 (566 aa).

A compositionally biased stretch (basic and acidic residues) spans 1 to 31 (MNELHDGESSEEGRINVEDHLEEAKKDDTGH). Disordered stretches follow at residues 1–39 (MNEL…GTAK) and 60–152 (SRKK…EKLK). Polar residues predominate over residues 74-85 (AANQSPSGAPES). Residues 119–129 (SFFKSGRKKKD) are compositionally biased toward basic residues. A compositionally biased stretch (polar residues) spans 134–145 (RNVSRSNGADTS). The region spanning 195–485 (FEKVFLLGKG…AADVKLHPFF (291 aa)) is the Protein kinase domain. ATP contacts are provided by residues 201-209 (LGKGDVGRV) and lysine 224. Aspartate 320 (proton acceptor) is an active-site residue. Threonine 379 is subject to Phosphothreonine. Serine 381 carries the phosphoserine modification. Threonine 385 carries the post-translational modification Phosphothreonine.

It belongs to the protein kinase superfamily. Ser/Thr protein kinase family. KIN82 subfamily.

It catalyses the reaction L-seryl-[protein] + ATP = O-phospho-L-seryl-[protein] + ADP + H(+). It carries out the reaction L-threonyl-[protein] + ATP = O-phospho-L-threonyl-[protein] + ADP + H(+). The chain is Serine/threonine-protein kinase ppk14 (ppk14) from Schizosaccharomyces pombe (strain 972 / ATCC 24843) (Fission yeast).